An 897-amino-acid polypeptide reads, in one-letter code: 3'-5' exonuclease DinG (897 aa).

An Exonuclease domain is found at 8–161; the sequence is VVDLETTGNQ…DEDAATTAKL (154 aa). A Helicase ATP-binding domain is found at 241-496; that stretch reads SKAVDQLGLT…KAIDQLEKQR (256 aa). Residue 276–283 coordinates ATP; sequence ASLGSGKS. The short motif at 448-451 is the DEAH box element; that stretch reads DEAH. The Helicase C-terminal domain maps to 703–893; it reads NIDEYVASIV…QFGKLLRQIQ (191 aa).

Belongs to the helicase family. DinG subfamily. Type 2 sub-subfamily.

In terms of biological role, 3'-5' exonuclease. This chain is 3'-5' exonuclease DinG, found in Staphylococcus aureus (strain USA300).